Consider the following 237-residue polypeptide: Protein lin-31 (237 aa).

A DNA-binding region (fork-head) is located at residues 12 to 103 (QKPPYSYIWL…SGMFENGSCL (92 aa)). 2 disordered regions span residues 110–141 (RARG…LLPE) and 195–237 (NFES…ILSS). 2 stretches are compositionally biased toward low complexity: residues 206-216 (SEISGSGSSSS) and 227-237 (SSFSIESILSS).

It is found in the nucleus. Functionally, lin-31 regulates how vulval precursor cells choose their fate. It helps specify three alternative cell fates in vulval development. This Caenorhabditis elegans protein is Protein lin-31 (lin-31).